A 205-amino-acid polypeptide reads, in one-letter code: Small ribosomal subunit protein uS2 (205 aa).

It belongs to the universal ribosomal protein uS2 family.

In Aeropyrum pernix (strain ATCC 700893 / DSM 11879 / JCM 9820 / NBRC 100138 / K1), this protein is Small ribosomal subunit protein uS2 (rps2).